Reading from the N-terminus, the 150-residue chain is Small ribosomal subunit protein eS19 (150 aa).

The protein belongs to the eukaryotic ribosomal protein eS19 family. Part of the 30S ribosomal subunit.

May be involved in maturation of the 30S ribosomal subunit. In Pyrococcus horikoshii (strain ATCC 700860 / DSM 12428 / JCM 9974 / NBRC 100139 / OT-3), this protein is Small ribosomal subunit protein eS19.